Reading from the N-terminus, the 378-residue chain is Succinyl-diaminopimelate desuccinylase (378 aa).

H67 provides a ligand contact to Zn(2+). D69 is an active-site residue. A Zn(2+)-binding site is contributed by D100. The Proton acceptor role is filled by E134. The Zn(2+) site is built by E135, E163, and H349.

The protein belongs to the peptidase M20A family. DapE subfamily. Homodimer. Zn(2+) is required as a cofactor. It depends on Co(2+) as a cofactor.

The enzyme catalyses N-succinyl-(2S,6S)-2,6-diaminopimelate + H2O = (2S,6S)-2,6-diaminopimelate + succinate. It functions in the pathway amino-acid biosynthesis; L-lysine biosynthesis via DAP pathway; LL-2,6-diaminopimelate from (S)-tetrahydrodipicolinate (succinylase route): step 3/3. Functionally, catalyzes the hydrolysis of N-succinyl-L,L-diaminopimelic acid (SDAP), forming succinate and LL-2,6-diaminopimelate (DAP), an intermediate involved in the bacterial biosynthesis of lysine and meso-diaminopimelic acid, an essential component of bacterial cell walls. The protein is Succinyl-diaminopimelate desuccinylase of Nitrosospira multiformis (strain ATCC 25196 / NCIMB 11849 / C 71).